We begin with the raw amino-acid sequence, 427 residues long: Outer capsid protein P8 (427 aa).

The protein belongs to the phytoreovirus outer capsid protein P8 family. As to quaternary structure, homotrimer. Homomultimer.

Its subcellular location is the virion. It is found in the host cytoplasm. Capsid protein which self-assembles to form the outer icosahedral capsid with a T=13 symmetry, about 70 nm in diameter and consisting of 780 molecules capsid proteins. The chain is Outer capsid protein P8 from Catharanthus roseus (Madagascar periwinkle).